Reading from the N-terminus, the 289-residue chain is ATP phosphoribosyltransferase (289 aa).

The protein belongs to the ATP phosphoribosyltransferase family. Long subfamily. Mg(2+) is required as a cofactor.

Its subcellular location is the cytoplasm. The enzyme catalyses 1-(5-phospho-beta-D-ribosyl)-ATP + diphosphate = 5-phospho-alpha-D-ribose 1-diphosphate + ATP. It participates in amino-acid biosynthesis; L-histidine biosynthesis; L-histidine from 5-phospho-alpha-D-ribose 1-diphosphate: step 1/9. Feedback inhibited by histidine. Catalyzes the condensation of ATP and 5-phosphoribose 1-diphosphate to form N'-(5'-phosphoribosyl)-ATP (PR-ATP). Has a crucial role in the pathway because the rate of histidine biosynthesis seems to be controlled primarily by regulation of HisG enzymatic activity. In Koribacter versatilis (strain Ellin345), this protein is ATP phosphoribosyltransferase.